The chain runs to 319 residues: Homoserine dehydrogenase (319 aa).

Phe-10, Thr-12, Val-13, Arg-40, Lys-57, Ser-92, Ser-93, Ser-114, and Lys-116 together coordinate NADPH. Val-13 contributes to the NAD(+) binding site. Residues Val-13 and Arg-40 each coordinate NADP(+). Ser-92 is an NAD(+) binding site. Ser-92 is an NADP(+) binding site. Ser-114 and Lys-116 together coordinate NADP(+). Na(+) is bound by residues Glu-140, Val-143, Ala-145, and Thr-147. The NADP(+) site is built by Gly-197 and Glu-200. Residues Glu-200 and Asp-211 each coordinate L-homoserine. The active-site Proton donor is Lys-215. Residue Gly-296 coordinates NADPH. Position 296 (Gly-296) interacts with NAD(+). Residue Gly-296 participates in NADP(+) binding.

It belongs to the homoserine dehydrogenase family. As to quaternary structure, homodimer. The cofactor is a metal cation.

The catalysed reaction is L-homoserine + NAD(+) = L-aspartate 4-semialdehyde + NADH + H(+). Its pathway is amino-acid biosynthesis; L-methionine biosynthesis via de novo pathway; L-homoserine from L-aspartate: step 3/3. It participates in amino-acid biosynthesis; L-threonine biosynthesis; L-threonine from L-aspartate: step 3/5. Its function is as follows. Catalyzes the conversion of L-aspartate-beta-semialdehyde (L-Asa) to L-homoserine (L-Hse), the third step in the biosynthesis of threonine and methionine from aspartate. Utilizes NADH but not NADPH as coenzyme. The chain is Homoserine dehydrogenase from Pyrococcus horikoshii (strain ATCC 700860 / DSM 12428 / JCM 9974 / NBRC 100139 / OT-3).